The sequence spans 121 residues: Phosphoribosyl-ATP pyrophosphatase (121 aa).

The protein belongs to the PRA-PH family.

It is found in the cytoplasm. The catalysed reaction is 1-(5-phospho-beta-D-ribosyl)-ATP + H2O = 1-(5-phospho-beta-D-ribosyl)-5'-AMP + diphosphate + H(+). It participates in amino-acid biosynthesis; L-histidine biosynthesis; L-histidine from 5-phospho-alpha-D-ribose 1-diphosphate: step 2/9. The polypeptide is Phosphoribosyl-ATP pyrophosphatase (Burkholderia vietnamiensis (strain G4 / LMG 22486) (Burkholderia cepacia (strain R1808))).